The primary structure comprises 267 residues: Undecaprenyl-diphosphatase (267 aa).

Helical transmembrane passes span 1–21, 39–59, 87–107, 111–131, 149–169, 189–209, 218–238, and 246–266; these read MTYF…FLPI, QGLA…VMYF, WLII…KDFI, LRSA…LWWV, ALFL…RSGI, FLMS…KLAL, FLGT…HFFL, and MTPF…WLAL.

It belongs to the UppP family.

The protein localises to the cell inner membrane. The catalysed reaction is di-trans,octa-cis-undecaprenyl diphosphate + H2O = di-trans,octa-cis-undecaprenyl phosphate + phosphate + H(+). Catalyzes the dephosphorylation of undecaprenyl diphosphate (UPP). Confers resistance to bacitracin. The sequence is that of Undecaprenyl-diphosphatase from Aliivibrio salmonicida (strain LFI1238) (Vibrio salmonicida (strain LFI1238)).